Here is a 417-residue protein sequence, read N- to C-terminus: Carboxypeptidase A2 (417 aa).

Residues 1-16 (MRLTPLLVALFGYIYC) form the signal peptide. A propeptide spans 17 to 112 (QETFVGDQVL…EMLFNQQRER (96 aa)) (activation peptide). Residues 120–412 (AYHTLEEIYQ…LGLKTIMEHV (293 aa)) form the Peptidase M14 domain. 2 residues coordinate Zn(2+): His-177 and Glu-180. Substrate is bound by residues 177-180 (HARE), Arg-235, and 252-253 (NR). Residues Cys-246 and Cys-269 are joined by a disulfide bond. His-304 serves as a coordination point for Zn(2+). 305 to 306 (SY) contacts substrate. Cys-318 and Cys-352 form a disulfide bridge. Tyr-356 contributes to the substrate binding site. The active-site Proton donor/acceptor is the Glu-378.

The protein belongs to the peptidase M14 family. The cofactor is Zn(2+).

The protein resides in the secreted. It catalyses the reaction Similar to that of carboxypeptidase A (EC 3.4.17.1), but with a preference for bulkier C-terminal residues.. In terms of biological role, carboxypeptidase that catalyzes the release of a C-terminal amino acid, with a preference for large aromatic C-terminal residues. The chain is Carboxypeptidase A2 (Cpa2) from Mus musculus (Mouse).